The chain runs to 202 residues: Thymidylate kinase (202 aa).

Residue 13–20 (GTDGAGKS) participates in ATP binding.

Belongs to the thymidylate kinase family.

It catalyses the reaction dTMP + ATP = dTDP + ADP. Phosphorylation of dTMP to form dTDP in both de novo and salvage pathways of dTTP synthesis. The sequence is that of Thymidylate kinase from Desulfotalea psychrophila (strain LSv54 / DSM 12343).